The primary structure comprises 143 residues: Photosystem I reaction center subunit IV B, chloroplastic (143 aa).

A chloroplast-targeting transit peptide spans 1–51 (MASSSMASAASGFMVATPNIATSNTAPRTSMLFFSSSKNNTTTNFPRLVVR). Positions 56-75 (AAPPAATATAEGEAPPAKAA) are enriched in low complexity. Residues 56 to 86 (AAPPAATATAEGEAPPAKAAKPPPIGPKRGT) are disordered.

It belongs to the PsaE family. In terms of processing, 2 isoforms exists (ratio 1:1). With or without the N-terminal alanine.

It is found in the plastid. Its subcellular location is the chloroplast thylakoid membrane. Functionally, stabilizes the interaction between PsaC and the PSI core, assists the docking of the ferredoxin to PSI and interacts with ferredoxin-NADP oxidoreductase. In Nicotiana sylvestris (Wood tobacco), this protein is Photosystem I reaction center subunit IV B, chloroplastic (PSAEB).